The chain runs to 151 residues: Deoxyuridine 5'-triphosphate nucleotidohydrolase (151 aa).

Substrate-binding positions include 70-72 (RSG), N83, 87-89 (LID), and M97.

It belongs to the dUTPase family. The cofactor is Mg(2+).

The enzyme catalyses dUTP + H2O = dUMP + diphosphate + H(+). It functions in the pathway pyrimidine metabolism; dUMP biosynthesis; dUMP from dCTP (dUTP route): step 2/2. In terms of biological role, this enzyme is involved in nucleotide metabolism: it produces dUMP, the immediate precursor of thymidine nucleotides and it decreases the intracellular concentration of dUTP so that uracil cannot be incorporated into DNA. This Pasteurella multocida (strain Pm70) protein is Deoxyuridine 5'-triphosphate nucleotidohydrolase.